We begin with the raw amino-acid sequence, 71 residues long: uncharacterized protein (71 aa).

The chain crosses the membrane as a helical span at residues 12–34 (YLYNYFSSTTSWLVFIILSLDTI).

It localises to the membrane. This is an uncharacterized protein from Schizosaccharomyces pombe (strain 972 / ATCC 24843) (Fission yeast).